Consider the following 183-residue polypeptide: UPF0340 protein LCA_1354 (183 aa).

It belongs to the UPF0340 family.

In Latilactobacillus sakei subsp. sakei (strain 23K) (Lactobacillus sakei subsp. sakei), this protein is UPF0340 protein LCA_1354.